The following is a 167-amino-acid chain: SsrA-binding protein (167 aa).

It belongs to the SmpB family.

Its subcellular location is the cytoplasm. Required for rescue of stalled ribosomes mediated by trans-translation. Binds to transfer-messenger RNA (tmRNA), required for stable association of tmRNA with ribosomes. tmRNA and SmpB together mimic tRNA shape, replacing the anticodon stem-loop with SmpB. tmRNA is encoded by the ssrA gene; the 2 termini fold to resemble tRNA(Ala) and it encodes a 'tag peptide', a short internal open reading frame. During trans-translation Ala-aminoacylated tmRNA acts like a tRNA, entering the A-site of stalled ribosomes, displacing the stalled mRNA. The ribosome then switches to translate the ORF on the tmRNA; the nascent peptide is terminated with the 'tag peptide' encoded by the tmRNA and targeted for degradation. The ribosome is freed to recommence translation, which seems to be the essential function of trans-translation. The chain is SsrA-binding protein from Stenotrophomonas maltophilia (strain R551-3).